A 188-amino-acid polypeptide reads, in one-letter code: Ion-translocating oxidoreductase complex subunit B (188 aa).

The tract at residues Met-1–Ala-23 is hydrophobic. In terms of domain architecture, 4Fe-4S spans Glu-29 to Val-88. Residues Cys-46, Cys-49, Cys-54, Cys-71, Cys-113, Cys-116, Cys-119, Cys-123, Cys-143, Cys-146, Cys-149, and Cys-153 each contribute to the [4Fe-4S] cluster site. 2 consecutive 4Fe-4S ferredoxin-type domains span residues Ser-104–Lys-133 and Gln-134–Ile-163.

Belongs to the 4Fe4S bacterial-type ferredoxin family. RnfB subfamily. In terms of assembly, the complex is composed of six subunits: RnfA, RnfB, RnfC, RnfD, RnfE and RnfG. The cofactor is [4Fe-4S] cluster.

The protein resides in the cell inner membrane. Functionally, part of a membrane-bound complex that couples electron transfer with translocation of ions across the membrane. This chain is Ion-translocating oxidoreductase complex subunit B, found in Thiobacillus denitrificans (strain ATCC 25259 / T1).